The primary structure comprises 213 residues: Redox-sensing transcriptional repressor Rex (213 aa).

The H-T-H motif DNA-binding region spans 17–56 (LYYRIFKRFHSENIEKASSKQIAEAIGIDSATVRRDFSYF). 91-96 (GVGNIG) lines the NAD(+) pocket.

Belongs to the transcriptional regulatory Rex family. In terms of assembly, homodimer.

It is found in the cytoplasm. Its function is as follows. Modulates transcription in response to changes in cellular NADH/NAD(+) redox state. The chain is Redox-sensing transcriptional repressor Rex from Streptococcus mutans serotype c (strain ATCC 700610 / UA159).